The following is a 574-amino-acid chain: MANSPHGGVLKDLLARDAPRHDELAAEAETLPAIVLSERQLCDLELIMNGGFSPLEGFMTQKDFDGVCENCRLADGHLFSMPITLDASQQVISDSNLKPGSRVTLRDFRDDRNLAILTIEDIYRADKEKEAKLVFGGDPEHPAIKYLNTKVEDFYIGGKIEAVNKLNHYDYVALRYSPAELRVHFDKLGWTRVVAFQTRNPMHRAHRELTVRAARARQANVLIHPVVGLTKPGDIDHFTRVRAYQALLPRYPNGMAVLGLLPLAMRMGGPREAIWHAIIRKNHGATHFIVGRDHAGPGKNSKGEEFYGPYDAQHAVEKYREELGIEVVEFQQVTYLPDTDEYKPKDEVPAGIKTLDISGTELRNRLRTGAHIPEWFSYPEVVKILRESSPPRATQGFTIFLTGYMNSGKDAIARALQVTLNQQGGRSVTLLLGDTVRHELSSELGFSAEDRHTNVQRIAFVAGELTRAGAAVIAAPIAPYERSRKAAREAVSGLGGSFFLVHVNTPLEYCEKTDKRGIYAKARRGEIKGFTGVDDPYEAPENADLVVDVSKQSVRSIVHEIILMLESEGYFDRL.

The segment at 1-169 (MANSPHGGVL…IEAVNKLNHY (169 aa)) is N-terminal. The interval 170-394 (DYVALRYSPA…LRESSPPRAT (225 aa)) is catalytic. Glutamine 197 provides a ligand contact to sulfate. Residues 197-200 (QTRN) and 291-294 (GRDH) contribute to the ATP site. Residues threonine 198, arginine 199, and asparagine 200 contribute to the active site. Residue arginine 199 coordinates sulfate. Alanine 295 provides a ligand contact to sulfate. Valine 333 contacts ATP. The tract at residues 395 to 574 (QGFTIFLTGY…LESEGYFDRL (180 aa)) is allosteric regulation domain; adenylyl-sulfate kinase-like. 3'-phosphoadenylyl sulfate is bound by residues 434 to 437 (DTVR), arginine 451, 477 to 478 (IA), and arginine 516.

It in the N-terminal section; belongs to the sulfate adenylyltransferase family. The protein in the C-terminal section; belongs to the APS kinase family. Homohexamer. Dimer of trimers.

The protein resides in the cytoplasm. It catalyses the reaction sulfate + ATP + H(+) = adenosine 5'-phosphosulfate + diphosphate. Its pathway is sulfur metabolism; hydrogen sulfide biosynthesis; sulfite from sulfate: step 1/3. Its activity is regulated as follows. Allosterically inhibited by 3'-phosphoadenosine 5'-phosphosulfate (PAPS). Catalyzes the first intracellular reaction of sulfate assimilation, forming adenosine-5'-phosphosulfate (APS) from inorganic sulfate and ATP. Plays an important role in sulfate activation as a component of the biosynthesis pathway of sulfur-containing amino acids. This chain is Sulfate adenylyltransferase, found in Aspergillus terreus (strain NIH 2624 / FGSC A1156).